A 124-amino-acid polypeptide reads, in one-letter code: Snaclec rhodocetin subunit delta (124 aa).

3 cysteine pairs are disulfide-bonded: C1–C12, C29–C120, and C95–C112. The 114-residue stretch at 8–121 folds into the C-type lectin domain; sequence YNGYCYRVFS…CEKTVSFVCK (114 aa).

This sequence belongs to the snaclec family. Heterotetramer of subunit alpha, beta, gamma and delta; only the gamma and the delta subunits are disulfide-linked. Alpha-beta heterodimer and gamma-delta heterodimer associate orthogonally, giving a cruciform conformation. This heterotetramer may covalently dimerizes thanks to the gamma subunit. Expressed by the venom gland.

Its subcellular location is the secreted. In terms of biological role, potent inhibitor of collagen-induced platelet aggregation. It acts by binding to the integrin alpha2A domain and blocks collagen binding to integrin alpha-2/beta-1 (ITGA2/ITGB1). The gamma/delta subunits mainly contribute to this activity. The protein is Snaclec rhodocetin subunit delta of Calloselasma rhodostoma (Malayan pit viper).